The following is a 155-amino-acid chain: 6,7-dimethyl-8-ribityllumazine synthase (155 aa).

Residues Phe-22, 57–59 (AYE), and 81–83 (SVI) contribute to the 5-amino-6-(D-ribitylamino)uracil site. 86 to 87 (GT) is a binding site for (2S)-2-hydroxy-3-oxobutyl phosphate. The active-site Proton donor is the His-88. Phe-113 is a binding site for 5-amino-6-(D-ribitylamino)uracil. A (2S)-2-hydroxy-3-oxobutyl phosphate-binding site is contributed by Arg-127.

The protein belongs to the DMRL synthase family. Forms an icosahedral capsid composed of 60 subunits, arranged as a dodecamer of pentamers.

It catalyses the reaction (2S)-2-hydroxy-3-oxobutyl phosphate + 5-amino-6-(D-ribitylamino)uracil = 6,7-dimethyl-8-(1-D-ribityl)lumazine + phosphate + 2 H2O + H(+). The protein operates within cofactor biosynthesis; riboflavin biosynthesis; riboflavin from 2-hydroxy-3-oxobutyl phosphate and 5-amino-6-(D-ribitylamino)uracil: step 1/2. Catalyzes the formation of 6,7-dimethyl-8-ribityllumazine by condensation of 5-amino-6-(D-ribitylamino)uracil with 3,4-dihydroxy-2-butanone 4-phosphate. This is the penultimate step in the biosynthesis of riboflavin. In Photobacterium phosphoreum, this protein is 6,7-dimethyl-8-ribityllumazine synthase.